The primary structure comprises 922 residues: MADQAKLGGKPSDDSNFAMIRDGVASYLNDSDPEETNEWMDSLDGLLQESSPERARYLMLRLLERASAKRVSLPPMTSTDYVNTIPTSMEPEFPGDEEMEKRYRRWIRWNAAIMVHRAQRPGIGVGGHISTYAGAAPLYEVGFNHFFRGKDHPGGGDQIFFQGHASPGMYARAFMEGRLSEDDLDGFRQEVSREQGGIPSYPHPHGMKDFWEFPTVSMGLGPMDAIYQARFNRYLENRGIKDTSDQHVWAFLGDGEMDEPESRGLIQQAALNNLDNLTFVVNCNLQRLDGPVRGNTKIIQELESFFRGAGWSVIKVVWGREWDELLEKDQDGALVEIMNNTSDGDYQTFKANDGAYVREHFFGRDPRTAKLVENMTDEEIWKLPRGGHDYRKVYAAYKRALETKDRPTVILAHTIKGYGLGHNFEGRNATHQMKKLTLDDLKLFRDKQGIPITDEQLEKDPYLPPYYHPGEDAPEIKYMKERRAALGGYLPERRENYDPIQVPPLDKLRSVRKGSGKQQIATTMATVRTFKELMRDKGLADRLVPIIPDEARTFGLDSWFPTLKIYNPHGQNYVPVDHDLMLSYREAPEGQILHEGINEAGSVASFIAAGTSYATHGKAMIPLYIFYSMFGFQRTGDSIWAAADQMARGFLLGATAGRTTLTGEGLQHMDGHSPVLASTNEGVETYDPSFAYEIAHLVHRGIDRMYGPGKGEDVIYYITIYNEPTPQPAEPEGLDVEGLHKGIYLYSRGEGTGHEANILASGVGMQWALKAASILEADYGVRANIYSATSWVNLARDGAARNKAQLRNPGADAGEAFVTTQLKQTSGPYVAVSDFSTDLPNQIREWVPGDYTVLGADGFGFSDTRPAARRFFNIDAESIVVAVLNSLAREGKIDVSVAAQAAEKFKLDDPTSVSVDPNAPEE.

As to quaternary structure, homodimer. Part of an unusual ODH/PDH supercomplex, consisting of AceE (E1), AceF (E2), and Lpd (E3) together with OdhA (E1+E2). Mg(2+) is required as a cofactor. Requires thiamine diphosphate as cofactor.

It carries out the reaction N(6)-[(R)-lipoyl]-L-lysyl-[protein] + pyruvate + H(+) = N(6)-[(R)-S(8)-acetyldihydrolipoyl]-L-lysyl-[protein] + CO2. Its function is as follows. Is a specific component of the pyruvate dehydrogenase (PDH) complex, that catalyzes the overall conversion of pyruvate to acetyl-CoA and CO(2). AceE has reductase activity with pyruvate but does not react with 2-oxoglutarate. The sequence is that of Pyruvate dehydrogenase E1 component (aceE) from Corynebacterium glutamicum (strain ATCC 13032 / DSM 20300 / JCM 1318 / BCRC 11384 / CCUG 27702 / LMG 3730 / NBRC 12168 / NCIMB 10025 / NRRL B-2784 / 534).